The following is a 258-amino-acid chain: Small ribosomal subunit protein uS2 (258 aa).

The segment at 222 to 258 is disordered; it reads GKALRDQDEAEQVEPVSQEEKDEVVAEAMSEADFEEQ.

The protein belongs to the universal ribosomal protein uS2 family.

The chain is Small ribosomal subunit protein uS2 from Campylobacter fetus subsp. fetus (strain 82-40).